Here is a 210-residue protein sequence, read N- to C-terminus: Shikimate kinase (210 aa).

34–39 (GAGKSV) contributes to the ATP binding site. Residue serine 38 participates in Mg(2+) binding. The substrate site is built by aspartate 56, arginine 80, and glycine 102. Residue arginine 140 coordinates ATP. Arginine 159 contributes to the substrate binding site.

Belongs to the shikimate kinase family. As to quaternary structure, monomer. It depends on Mg(2+) as a cofactor.

The protein localises to the cytoplasm. It catalyses the reaction shikimate + ATP = 3-phosphoshikimate + ADP + H(+). The protein operates within metabolic intermediate biosynthesis; chorismate biosynthesis; chorismate from D-erythrose 4-phosphate and phosphoenolpyruvate: step 5/7. Functionally, catalyzes the specific phosphorylation of the 3-hydroxyl group of shikimic acid using ATP as a cosubstrate. This is Shikimate kinase from Bartonella quintana (strain Toulouse) (Rochalimaea quintana).